The following is a 559-amino-acid chain: Potassium-transporting ATPase potassium-binding subunit (559 aa).

The next 13 helical transmembrane spans lie at 5 to 25 (GFLL…PLGS), 27 to 47 (LARL…RILW), 63 to 83 (LLAL…LLFW), 132 to 152 (GLTV…FALI), 170 to 190 (LVRI…LFFI), 253 to 273 (LAQM…FGEA), 283 to 303 (LLWA…WAEV), 327 to 347 (FGVL…CGAV), 356 to 376 (ALGG…FGGV), 379 to 399 (GLYG…LMIG), 416 to 436 (MTAL…ALAM), 484 to 504 (LLAF…MAIA), and 524 to 544 (GALF…LTFI).

The protein belongs to the KdpA family. The system is composed of three essential subunits: KdpA, KdpB and KdpC.

The protein localises to the cell inner membrane. Functionally, part of the high-affinity ATP-driven potassium transport (or Kdp) system, which catalyzes the hydrolysis of ATP coupled with the electrogenic transport of potassium into the cytoplasm. This subunit binds the periplasmic potassium ions and delivers the ions to the membrane domain of KdpB through an intramembrane tunnel. This is Potassium-transporting ATPase potassium-binding subunit from Salmonella typhi.